Reading from the N-terminus, the 86-residue chain is UPF0297 protein SERP1181 (86 aa).

This sequence belongs to the UPF0297 family.

The protein is UPF0297 protein SERP1181 of Staphylococcus epidermidis (strain ATCC 35984 / DSM 28319 / BCRC 17069 / CCUG 31568 / BM 3577 / RP62A).